Consider the following 201-residue polypeptide: Nucleoid occlusion factor SlmA (201 aa).

One can recognise an HTH tetR-type domain in the interval 14 to 75 (KERQQQVLEV…ALIERIEMTL (62 aa)). Positions 38-57 (TTERLSKAVGVSEGALYRYF) form a DNA-binding region, H-T-H motif.

The protein belongs to the nucleoid occlusion factor SlmA family. Homodimer. Interacts with FtsZ.

Its subcellular location is the cytoplasm. It is found in the nucleoid. In terms of biological role, required for nucleoid occlusion (NO) phenomenon, which prevents Z-ring formation and cell division over the nucleoid. Acts as a DNA-associated cell division inhibitor that binds simultaneously chromosomal DNA and FtsZ, and disrupts the assembly of FtsZ polymers. SlmA-DNA-binding sequences (SBS) are dispersed on non-Ter regions of the chromosome, preventing FtsZ polymerization at these regions. This Glaesserella parasuis serovar 5 (strain SH0165) (Haemophilus parasuis) protein is Nucleoid occlusion factor SlmA.